Reading from the N-terminus, the 1104-residue chain is Partner and localizer of BRCA2 (1104 aa).

The required for its oligomerization and is important for its focal concentration at DNA damage sites stretch occupies residues M1 to K157. The interaction with RAD51 stretch occupies residues M1–L195. The tract at residues M1–P308 is interaction with BRCA1. Positions L9–K48 form a coiled coil. Residues K39–E52 show a composition bias toward basic and acidic residues. Disordered stretches follow at residues K39 to N91, G122 to K157, and P243 to P272. Composition is skewed to polar residues over residues E59–I70 and N138–S154. Residue S274 is modified to Phosphoserine. The tract at residues L304 to P354 is disordered. Over residues G306–T338 the composition is skewed to polar residues. Position 364 is a phosphoserine (S364). The tract at residues S374 to K424 is chAM (Chromatin-association motif); required for chromatin association, mediates nucleosome association. 2 disordered regions span residues K417–T494 and L581–P730. At S432 the chain carries Phosphoserine. The span at T446–S462 shows a compositional bias: low complexity. The span at R483 to A492 shows a compositional bias: basic residues. Residues T664 to Q713 are compositionally biased toward polar residues. The tract at residues Q693–F1104 is required for interaction with POLH and POLH DNA synthesis stimulation. Positions G771 to F1104 are interaction with RAD51 and BRCA2. Residues G771–F1104 form an interaction with RAD51, BRCA2 and POLH region. WD repeat units lie at residues N772–T833, V835–L879, K880–P927, D928–D970, S976–S1027, A1033–P1071, and S1073–F1104.

As to quaternary structure, homooligomer; dissociated upon DNA damage thus allowing association with BRCA1. Oligomerization is essential for its focal accumulation at DNA breaks. Part of a BRCA complex containing BRCA1, BRCA2 and PALB2. Interacts with BRCA1 and this interaction is essential for its function in HRR. Interacts with RAD51AP1 and MORF4L1/MRG15. Component of the homologous recombination repair (HR) complex composed of ERCC5/XPG, BRCA2, PALB2, DSS1 and RAD51. Within the complex, interacts with ERCC5/XPG and BRCA2. Interacts with BRCA2, RAD51C, RAD51 and XRCC3; the interactions are direct and it may serve as a scaffold for a HR complex containing PALB2, BRCA2, RAD51C, RAD51 and XRCC3. Interacts with POLH; the interaction is direct.

The protein localises to the nucleus. In terms of biological role, plays a critical role in homologous recombination repair (HRR) through its ability to recruit BRCA2 and RAD51 to DNA breaks. Strongly stimulates the DNA strand-invasion activity of RAD51, stabilizes the nucleoprotein filament against a disruptive BRC3-BRC4 polypeptide and helps RAD51 to overcome the suppressive effect of replication protein A (RPA). Functionally cooperates with RAD51AP1 in promoting of D-loop formation by RAD51. Serves as the molecular scaffold in the formation of the BRCA1-PALB2-BRCA2 complex which is essential for homologous recombination. Via its WD repeats is proposed to scaffold a HR complex containing RAD51C and BRCA2 which is thought to play a role in HR-mediated DNA repair. Essential partner of BRCA2 that promotes the localization and stability of BRCA2. Also enables its recombinational repair and checkpoint functions of BRCA2. May act by promoting stable association of BRCA2 with nuclear structures, allowing BRCA2 to escape the effects of proteasome-mediated degradation. Binds DNA with high affinity for D loop, which comprises single-stranded, double-stranded and branched DNA structures. May play a role in the extension step after strand invasion at replication-dependent DNA double-strand breaks; together with BRCA2 is involved in both POLH localization at collapsed replication forks and DNA polymerization activity. The polypeptide is Partner and localizer of BRCA2 (Palb2) (Mus musculus (Mouse)).